A 153-amino-acid chain; its full sequence is MSERDAQGATDIEGIMNLLPHRYPLLLIDRVLDFQPHEHLASIKNVTINEPFFVGHFPQKPVMPGVLILESLAQACGMLAFKSVQDTLTDNDVLYLVGIDKARFKRPVQPGDQLRHDVSVRRVTRGIWIFEARGSVDGELAAECEIRCTVRTV.

The active site involves His-56.

This sequence belongs to the thioester dehydratase family. FabZ subfamily.

It localises to the cytoplasm. It carries out the reaction a (3R)-hydroxyacyl-[ACP] = a (2E)-enoyl-[ACP] + H2O. Its function is as follows. Involved in unsaturated fatty acids biosynthesis. Catalyzes the dehydration of short chain beta-hydroxyacyl-ACPs and long chain saturated and unsaturated beta-hydroxyacyl-ACPs. This Halorhodospira halophila (strain DSM 244 / SL1) (Ectothiorhodospira halophila (strain DSM 244 / SL1)) protein is 3-hydroxyacyl-[acyl-carrier-protein] dehydratase FabZ.